A 128-amino-acid chain; its full sequence is Large ribosomal subunit protein eL8 (128 aa).

The protein belongs to the eukaryotic ribosomal protein eL8 family. In terms of assembly, part of the 50S ribosomal subunit. Probably part of the RNase P complex.

It localises to the cytoplasm. Functionally, multifunctional RNA-binding protein that recognizes the K-turn motif in ribosomal RNA, the RNA component of RNase P, box H/ACA, box C/D and box C'/D' sRNAs. This is Large ribosomal subunit protein eL8 from Ignicoccus hospitalis (strain KIN4/I / DSM 18386 / JCM 14125).